Reading from the N-terminus, the 817-residue chain is DNA ligase (817 aa).

Residues 45-49, 94-95, and E131 each bind NAD(+); these read DVEYD and SI. K133 (N6-AMP-lysine intermediate) is an active-site residue. Residues R154, E193, K311, and K335 each coordinate NAD(+). Positions 444, 447, 462, and 468 each coordinate Zn(2+). The 85-residue stretch at 733–817 folds into the BRCT domain; the sequence is AEEGVLDGKT…LLKKPAGDQA (85 aa).

Belongs to the NAD-dependent DNA ligase family. LigA subfamily. The cofactor is Mg(2+). Requires Mn(2+) as cofactor.

The catalysed reaction is NAD(+) + (deoxyribonucleotide)n-3'-hydroxyl + 5'-phospho-(deoxyribonucleotide)m = (deoxyribonucleotide)n+m + AMP + beta-nicotinamide D-nucleotide.. In terms of biological role, DNA ligase that catalyzes the formation of phosphodiester linkages between 5'-phosphoryl and 3'-hydroxyl groups in double-stranded DNA using NAD as a coenzyme and as the energy source for the reaction. It is essential for DNA replication and repair of damaged DNA. The polypeptide is DNA ligase (Ralstonia pickettii (strain 12J)).